Here is a 450-residue protein sequence, read N- to C-terminus: Cytochrome c1 (450 aa).

The N-terminal stretch at 1-21 (MTLRNASLTAVAALTVALAGG) is a signal peptide. Low complexity predominate over residues 24-58 (AQDASTAPGTTAPAGSSYHTNEAAPAAADTAPAAE). The disordered stretch occupies residues 24–210 (AQDASTAPGT…AAAQEAGDSH (187 aa)). Acidic residues-rich tracts occupy residues 59–77 (AADE…EVTE), 85–108 (PAEE…EPAA), and 118–194 (APAE…EDEA). The heme c site is built by cysteine 245, cysteine 248, and histidine 249. Residues 284–305 (PETEEDRPRVPTDHFPTVSGEG) form a disordered region. Methionine 373 is a binding site for heme c. The chain crosses the membrane as a helical span at residues 421-435 (SVIFLIVLAALLYLT).

As to quaternary structure, the main subunits of complex b-c1 are: cytochrome b, cytochrome c1 and the Rieske protein. Binds 1 heme c group covalently per subunit.

The protein localises to the cell membrane. Its function is as follows. Component of the ubiquinol-cytochrome c reductase complex (complex III or cytochrome b-c1 complex), which is a respiratory chain that generates an electrochemical potential coupled to ATP synthesis. c1 functions as an electron donor to cytochrome c. This chain is Cytochrome c1 (petC), found in Paracoccus denitrificans.